The following is a 949-amino-acid chain: Coiled-coil domain-containing protein 66 (949 aa).

2 positions are modified to phosphothreonine: T115 and T121. Residue S369 is modified to Phosphoserine. Residues 474–558 (QVEEKCRKKQ…EQRIRELAQK (85 aa)) are a coiled coil. The interval 570–949 (GVDTIQIEYN…NQEENFGSSF (380 aa)) is mediates localization to cilia, centrosomes and spindle microtubules and the interaction with PCM1, CEP290, CEP104 and CSPP1. A Phosphoserine modification is found at S606. 2 disordered regions span residues 691–714 (QTKH…KRYI) and 789–809 (SFSK…RTQQ).

Homodimer; disulfide-linked. Interacts with CEP290. Interacts with PCM1. Interacts with ARMC9, TOGARAM1, CSPP1 and CEP104. Interacts with CDK5RAP2, CEP152, CEP192, TBG1 and PRC1.

It localises to the cytoplasm. The protein resides in the cytoskeleton. It is found in the microtubule organizing center. The protein localises to the centrosome. Its subcellular location is the centriolar satellite. It localises to the cell projection. The protein resides in the cilium. It is found in the cilium basal body. The protein localises to the cilium axoneme. Its subcellular location is the photoreceptor inner segment. It localises to the photoreceptor outer segment. Its function is as follows. Microtubule-binding protein required for ciliogenesis. May function in ciliogenesis by mediating the transport of proteins like BBS4 to the cilium, but also through the organization of the centriolar satellites. Required for the assembly of signaling-competent cilia with proper structure and length. Mediates this function in part by regulating transition zone assembly and basal body recruitment of the IFT-B complex. Cooperates with the ciliopathy proteins CSPP1 and CEP104 during cilium length regulation. Plays two important roles during cell division. First, is required for mitotic progression via regulation of spindle assembly, organization and orientation, levels of spindle microtubules (MTs), kinetochore-fiber integrity, and chromosome alignment. Second, functions during cytokinesis in part by regulating assembly and organization of central spindle and midbody MTs Plays a role in retina morphogenesis and/or homeostasis. The protein is Coiled-coil domain-containing protein 66 of Pongo abelii (Sumatran orangutan).